A 340-amino-acid chain; its full sequence is Phosphoribosylformylglycinamidine cyclo-ligase (340 aa).

The protein belongs to the AIR synthase family.

It is found in the cytoplasm. It carries out the reaction 2-formamido-N(1)-(5-O-phospho-beta-D-ribosyl)acetamidine + ATP = 5-amino-1-(5-phospho-beta-D-ribosyl)imidazole + ADP + phosphate + H(+). It functions in the pathway purine metabolism; IMP biosynthesis via de novo pathway; 5-amino-1-(5-phospho-D-ribosyl)imidazole from N(2)-formyl-N(1)-(5-phospho-D-ribosyl)glycinamide: step 2/2. The chain is Phosphoribosylformylglycinamidine cyclo-ligase from Streptococcus pneumoniae (strain CGSP14).